A 587-amino-acid polypeptide reads, in one-letter code: 5-aminolevulinate synthase, erythroid-specific, mitochondrial (587 aa).

Residues 1–49 constitute a mitochondrion transit peptide; that stretch reads MVTAAMLLQRCPVLIRSPTGLLGKMIKTHQFLFGIGRCPILATQGPSFS. Arginine 163 is a binding site for succinyl-CoA. 2 residues coordinate pyridoxal 5'-phosphate: cysteine 258 and phenylalanine 259. Residues serine 280 and lysine 299 each contribute to the succinyl-CoA site. Residues serine 332, histidine 360, and threonine 388 each coordinate pyridoxal 5'-phosphate. Lysine 391 is an active-site residue. Lysine 391 carries the N6-(pyridoxal phosphate)lysine modification. Positions 420 and 421 each coordinate pyridoxal 5'-phosphate. Threonine 508 serves as a coordination point for succinyl-CoA.

Belongs to the class-II pyridoxal-phosphate-dependent aminotransferase family. As to quaternary structure, homodimer. Interacts with SUCLA2. Requires pyridoxal 5'-phosphate as cofactor.

The protein resides in the mitochondrion inner membrane. It catalyses the reaction succinyl-CoA + glycine + H(+) = 5-aminolevulinate + CO2 + CoA. The protein operates within porphyrin-containing compound metabolism; protoporphyrin-IX biosynthesis; 5-aminolevulinate from glycine: step 1/1. Catalyzes the pyridoxal 5'-phosphate (PLP)-dependent condensation of succinyl-CoA and glycine to form aminolevulinic acid (ALA), with CoA and CO2 as by-products. Contributes significantly to heme formation during erythropoiesis. The chain is 5-aminolevulinate synthase, erythroid-specific, mitochondrial (ALAS2) from Bos taurus (Bovine).